An 85-amino-acid polypeptide reads, in one-letter code: Conotoxin Lt28.2 (85 aa).

The first 21 residues, 1 to 21 (MPKLEMMLLVLLILPLCYIDA), serve as a signal peptide directing secretion. The propeptide occupies 22-40 (VGPPPPWNMEDEIIEHWQK).

It belongs to the conotoxin D superfamily. In terms of processing, contains 5 disulfide bonds. As to expression, expressed by the venom duct.

The protein resides in the secreted. In terms of biological role, probable neurotoxin. This chain is Conotoxin Lt28.2, found in Conus litteratus (Lettered cone).